Here is a 274-residue protein sequence, read N- to C-terminus: Basic leucine zipper transcriptional factor ATF-like 2 (274 aa).

3 disordered regions span residues 1–47, 128–151, and 187–229; these read MHLC…ALHQ, GSCY…LLQC, and GSSS…PSSA. Residues 17 to 80 enclose the bZIP domain; that stretch reads EQQRQLKKQK…AWWSRTLHVH (64 aa). The segment at 20–41 is basic motif; that stretch reads RQLKKQKNRAAAQRSRQKHTDK. Residues 37 to 47 are compositionally biased toward basic and acidic residues; it reads KHTDKADALHQ. Positions 45 to 66 are leucine-zipper; that stretch reads LHQQHESLEKDNLALRKEIQSL. The segment covering 187–196 has biased composition (low complexity); that stretch reads GSSSKLSALQ.

This sequence belongs to the bZIP family. In terms of assembly, heterodimer; heterodimerizes with JUN family proteins.

The protein localises to the nucleus. AP-1 family transcription factor that controls the differentiation of lineage-specific cells in the immune system. Following infection, participates in the differentiation of CD8(+) thymic conventional dendritic cells in the immune system. Acts via the formation of a heterodimer with JUN family proteins that recognizes and binds DNA sequence 5'-TGA[CG]TCA-3' and regulates expression of target genes. Selectively suppresses CCN1 transcription and hence blocks the downstream cell proliferation signals produced by CCN1 and inhibits CCN1-induced anchorage-independent growth and invasion in several cancer types, such as breast cancer, malignant glioma and metastatic melanoma. Possibly acts by interfering with AP-1 binding to CCN1 promoter. This is Basic leucine zipper transcriptional factor ATF-like 2 (BATF2) from Homo sapiens (Human).